Here is a 263-residue protein sequence, read N- to C-terminus: Probable esterase PIR7A (263 aa).

The Acyl-ester intermediate role is filled by Ser-82. Residues Asp-213 and His-241 each act as charge relay system in the active site.

Belongs to the AB hydrolase superfamily.

The polypeptide is Probable esterase PIR7A (PIR7A) (Oryza sativa subsp. indica (Rice)).